The sequence spans 336 residues: Transmembrane protein 19 (336 aa).

The next 6 membrane-spanning stretches (helical) occupy residues 19 to 39, 49 to 69, 86 to 106, 224 to 244, 250 to 270, and 313 to 333; these read IVIL…SITA, ISPW…WHGI, GFIL…FFFI, ISSL…QLIF, IAAP…LGSL, and VNLF…WSFW.

It belongs to the TMEM19 family.

The protein resides in the membrane. The chain is Transmembrane protein 19 (tmem19) from Xenopus tropicalis (Western clawed frog).